The following is a 930-amino-acid chain: Isoleucine--tRNA ligase (930 aa).

Positions 57–67 (PYANGNIHVGH) match the 'HIGH' region motif. Glu-554 serves as a coordination point for L-isoleucyl-5'-AMP. A 'KMSKS' region motif is present at residues 595-599 (KMSKS). Lys-598 serves as a coordination point for ATP. 4 residues coordinate Zn(2+): Cys-888, Cys-891, Cys-908, and Cys-911.

The protein belongs to the class-I aminoacyl-tRNA synthetase family. IleS type 1 subfamily. Monomer. The cofactor is Zn(2+).

It localises to the cytoplasm. The catalysed reaction is tRNA(Ile) + L-isoleucine + ATP = L-isoleucyl-tRNA(Ile) + AMP + diphosphate. Catalyzes the attachment of isoleucine to tRNA(Ile). As IleRS can inadvertently accommodate and process structurally similar amino acids such as valine, to avoid such errors it has two additional distinct tRNA(Ile)-dependent editing activities. One activity is designated as 'pretransfer' editing and involves the hydrolysis of activated Val-AMP. The other activity is designated 'posttransfer' editing and involves deacylation of mischarged Val-tRNA(Ile). In Streptococcus sanguinis (strain SK36), this protein is Isoleucine--tRNA ligase.